The sequence spans 564 residues: Efflux pump DEP3 (564 aa).

Residues 1 to 12 (MVYSSTSSSQNR) are compositionally biased toward polar residues. The interval 1–48 (MVYSSTSSSQNRPDGEKHVEAVGSSTRIPSDELVDRGGGDTTTGKQSP) is disordered. Over residues 29–38 (PSDELVDRGG) the composition is skewed to basic and acidic residues. 14 consecutive transmembrane segments (helical) span residues 65-85 (STTLLFALDNTIVANIQPAII), 91-111 (LELLSWIGTGFALGTMFILLW), 122-142 (WVYIFNIFLFEAGSALCGAAP), 152-172 (VIAGVGGSGMYSGTLTYVSVL), 185-205 (STVVWGIGSVLGPVVGGAFAA), 212-232 (WGFYVNLPIGAAFAPVYFLLF), 255-275 (AVIFLAGSACLTVVLTFGGVV), 281-301 (GTVIALWTVTGILLVAFIVLL), 332-352 (FLSSGIILAMTYYVPLYFQFI), 362-382 (VRLLPLIMFMVVASMVNGFLM), 386-406 (GLIPIWYIGGSSLALIGTALM), 423-443 (ILIGAGTGSYIVAGFAIVQSL), 452-472 (AVGAMTIFQDLGMVLFLAISG), and 528-548 (TIWAFFLAAAALSVVCSFPLL).

This sequence belongs to the major facilitator superfamily. TCR/Tet family.

It localises to the cell membrane. Efflux pump; part of the gene cluster that mediates the biosynthesis of depudecin, a highly oxidized eleven-carbon linear polyketide that acts as a histone deacetylase (HDAC) inhibitor and makes a small contribution to pathogenesis. Is presumed either to be responsible for exporting depudecin, to provide self-protection, or both. In Alternaria brassicicola (Dark leaf spot agent), this protein is Efflux pump DEP3.